We begin with the raw amino-acid sequence, 135 residues long: FK506-binding protein 2 (135 aa).

An N-terminal signal peptide occupies residues 1-17 (MLLKSLFLLFLTAIAFA). Residues 40–127 (GDLISVHYEG…VFVAELVDIA (88 aa)) form the PPIase FKBP-type domain. The Prevents secretion from ER signature appears at 132–135 (HDEL).

The protein belongs to the FKBP-type PPIase family. FKBP2 subfamily.

Its subcellular location is the endoplasmic reticulum. The enzyme catalyses [protein]-peptidylproline (omega=180) = [protein]-peptidylproline (omega=0). Inhibited by both FK506 and rapamycin. In terms of biological role, PPIases accelerate the folding of proteins. It catalyzes the cis-trans isomerization of proline imidic peptide bonds in oligopeptides. The sequence is that of FK506-binding protein 2 (FPR2) from Debaryomyces hansenii (strain ATCC 36239 / CBS 767 / BCRC 21394 / JCM 1990 / NBRC 0083 / IGC 2968) (Yeast).